We begin with the raw amino-acid sequence, 97 residues long: Co-chaperonin GroES (97 aa).

Belongs to the GroES chaperonin family. Heptamer of 7 subunits arranged in a ring. Interacts with the chaperonin GroEL.

It localises to the cytoplasm. In terms of biological role, together with the chaperonin GroEL, plays an essential role in assisting protein folding. The GroEL-GroES system forms a nano-cage that allows encapsulation of the non-native substrate proteins and provides a physical environment optimized to promote and accelerate protein folding. GroES binds to the apical surface of the GroEL ring, thereby capping the opening of the GroEL channel. The chain is Co-chaperonin GroES from Ectopseudomonas mendocina (strain ymp) (Pseudomonas mendocina).